The following is a 1016-amino-acid chain: Vacuolar membrane protease (1016 aa).

Residues 1-36 are disordered; sequence MAETESGTGNSPSHRLSETSNASGNRSHQQSKQIAS. Over 1–57 the chain is Cytoplasmic; sequence MAETESGTGNSPSHRLSETSNASGNRSHQQSKQIASYKSSKPNVFIRFIRAIFGYRK. The chain crosses the membrane as a helical span at residues 58 to 78; the sequence is TSVTLFVFITIIATLILVELS. Residues 79-408 lie on the Vacuolar side of the membrane; sequence NSLDFSVKLP…FVIPASQLVL (330 aa). N-linked (GlcNAc...) asparagine glycans are attached at residues Asn147 and Asn177. Zn(2+) is bound by residues His191 and Asp203. Glu238 (proton acceptor) is an active-site residue. Positions 239, 264, and 337 each coordinate Zn(2+). Residues 409-429 form a helical membrane-spanning segment; that stretch reads INVTCLAVIPLISLPLLVIIF. Over 430-438 the chain is Cytoplasmic; the sequence is NYKKNWHIG. A helical membrane pass occupies residues 439–459; sequence FINAIKFPVSLVLSICILNII. At 460-481 the chain is on the vacuolar side; it reads THNVIASINEFLPNSSYDSIVS. A glycan (N-linked (GlcNAc...) asparagine) is linked at Asn473. A helical membrane pass occupies residues 482–502; sequence TLYSLFLLLNYLFLNGINFIF. Residues 503 to 511 lie on the Cytoplasmic side of the membrane; sequence KGYKGLYHD. Residues 512–532 form a helical membrane-spanning segment; that stretch reads EKLILIIQTSFIYWVLLIVST. The Vacuolar segment spans residues 533–547; sequence NKLSKNKIGNDHTGE. Residues 548 to 568 traverse the membrane as a helical segment; sequence FPLIMLFLLQSIGALFGLFSW. The Cytoplasmic portion of the chain corresponds to 569-646; sequence SFKKTTPDEL…SFSYDWSIQY (78 aa). The disordered stretch occupies residues 598–622; that stretch reads YGSNEAELESGEPISSNSSVSLNSS. The span at 612–622 shows a compositional bias: low complexity; the sequence is SSNSSVSLNSS. Residues 647–667 traverse the membrane as a helical segment; it reads VVIVPLSSLIVYNTGSLLLSG. Over 668 to 681 the chain is Vacuolar; the sequence is LNKSIQESLNAEKL. An N-linked (GlcNAc...) asparagine glycan is attached at Asn669. A helical transmembrane segment spans residues 682–702; sequence IFDLIQLVAVTLAIPFLPFIF. At 703 to 706 the chain is on the cytoplasmic side; the sequence is KINR. A helical membrane pass occupies residues 707-727; it reads LLVTALVLVFCSGFISIFLKS. The Vacuolar segment spans residues 728-1016; the sequence is PFDQLNPLKL…LVSVSKYVEI (289 aa). Asn778, Asn821, Asn850, Asn875, and Asn977 each carry an N-linked (GlcNAc...) asparagine glycan.

Belongs to the peptidase M28 family. Zn(2+) serves as cofactor.

The protein localises to the vacuole membrane. In terms of biological role, may be involved in vacuolar sorting and osmoregulation. The polypeptide is Vacuolar membrane protease (Debaryomyces hansenii (strain ATCC 36239 / CBS 767 / BCRC 21394 / JCM 1990 / NBRC 0083 / IGC 2968) (Yeast)).